Consider the following 423-residue polypeptide: Isovaleryl-CoA dehydrogenase, mitochondrial (423 aa).

The transit peptide at 1 to 29 (MATATRLLGWRVASWRMRPPPAGFVSQRA) directs the protein to the mitochondrion. Residues lysine 55, lysine 64, and lysine 75 each carry the N6-acetyllysine; alternate modification. Lysine 55, lysine 64, and lysine 75 each carry N6-succinyllysine; alternate. Residues 162–171 (LAMSEPNAGS) and 195–197 (WIT) each bind FAD. Position 171 (serine 171) interacts with substrate. 219–220 (SR) is a substrate binding site. An N6-acetyllysine modification is found at lysine 238. Lysine 259 is subject to N6-acetyllysine; alternate. An N6-succinyllysine; alternate modification is found at lysine 259. Residues tyrosine 274 and 281-284 (DLER) each bind substrate. Glutamate 283 serves as the catalytic Proton acceptor. Position 309 (arginine 309) interacts with FAD. An N6-succinyllysine modification is found at lysine 315. FAD is bound by residues glutamine 320 and 377 to 381 (QCFGG). Substrate is bound at residue 404 to 405 (AG). 406 to 408 (TSE) contacts FAD.

Belongs to the acyl-CoA dehydrogenase family. In terms of assembly, homotetramer. It depends on FAD as a cofactor.

Its subcellular location is the mitochondrion matrix. The enzyme catalyses 3-methylbutanoyl-CoA + oxidized [electron-transfer flavoprotein] + H(+) = 3-methylbut-2-enoyl-CoA + reduced [electron-transfer flavoprotein]. It catalyses the reaction pentanoyl-CoA + oxidized [electron-transfer flavoprotein] + H(+) = (2E)-pentenoyl-CoA + reduced [electron-transfer flavoprotein]. It carries out the reaction hexanoyl-CoA + oxidized [electron-transfer flavoprotein] + H(+) = (2E)-hexenoyl-CoA + reduced [electron-transfer flavoprotein]. The catalysed reaction is butanoyl-CoA + oxidized [electron-transfer flavoprotein] + H(+) = (2E)-butenoyl-CoA + reduced [electron-transfer flavoprotein]. The protein operates within amino-acid degradation; L-leucine degradation; (S)-3-hydroxy-3-methylglutaryl-CoA from 3-isovaleryl-CoA: step 1/3. In terms of biological role, catalyzes the conversion of isovaleryl-CoA/3-methylbutanoyl-CoA to 3-methylbut-2-enoyl-CoA as an intermediate step in the leucine (Leu) catabolic pathway. To a lesser extent, is also able to catalyze the oxidation of other saturated short-chain acyl-CoA thioesters as pentanoyl-CoA, hexenoyl-CoA and butenoyl-CoA. The protein is Isovaleryl-CoA dehydrogenase, mitochondrial (IVD) of Pongo abelii (Sumatran orangutan).